The sequence spans 116 residues: Ribonuclease P protein component (116 aa).

Belongs to the RnpA family. Consists of a catalytic RNA component (M1 or rnpB) and a protein subunit.

It carries out the reaction Endonucleolytic cleavage of RNA, removing 5'-extranucleotides from tRNA precursor.. Functionally, RNaseP catalyzes the removal of the 5'-leader sequence from pre-tRNA to produce the mature 5'-terminus. It can also cleave other RNA substrates such as 4.5S RNA. The protein component plays an auxiliary but essential role in vivo by binding to the 5'-leader sequence and broadening the substrate specificity of the ribozyme. The protein is Ribonuclease P protein component of Acholeplasma laidlawii (strain PG-8A).